A 113-amino-acid polypeptide reads, in one-letter code: Putative membrane protein insertion efficiency factor (113 aa).

It belongs to the UPF0161 family.

It is found in the cell inner membrane. In terms of biological role, could be involved in insertion of integral membrane proteins into the membrane. In Campylobacter jejuni subsp. doylei (strain ATCC BAA-1458 / RM4099 / 269.97), this protein is Putative membrane protein insertion efficiency factor.